Consider the following 108-residue polypeptide: Glutaredoxin-1 (108 aa).

The 104-residue stretch at 3–106 folds into the Glutaredoxin domain; the sequence is EEFVQQRLAN…DILLSIGVLR (104 aa). Residues Cys-23 and Cys-26 are joined by a disulfide bond.

The protein belongs to the glutaredoxin family.

The protein localises to the virion. Displays thioltransferase and dehydroascorbate reductase activities. In Cynomys gunnisoni (Gunnison's prairie dog), this protein is Glutaredoxin-1 (OPG075).